Reading from the N-terminus, the 242-residue chain is uncharacterized protein (242 aa).

In terms of domain architecture, S4 RNA-binding spans Tyr2–Pro69. Residue Asp102 is the Nucleophile of the active site.

Belongs to the pseudouridine synthase RsuA family.

It catalyses the reaction a uridine in RNA = a pseudouridine in RNA. This is an uncharacterized protein from Rickettsia typhi (strain ATCC VR-144 / Wilmington).